A 241-amino-acid polypeptide reads, in one-letter code: 2-C-methyl-D-erythritol 4-phosphate cytidylyltransferase (241 aa).

Belongs to the IspD/TarI cytidylyltransferase family. IspD subfamily.

The catalysed reaction is 2-C-methyl-D-erythritol 4-phosphate + CTP + H(+) = 4-CDP-2-C-methyl-D-erythritol + diphosphate. The protein operates within isoprenoid biosynthesis; isopentenyl diphosphate biosynthesis via DXP pathway; isopentenyl diphosphate from 1-deoxy-D-xylulose 5-phosphate: step 2/6. In terms of biological role, catalyzes the formation of 4-diphosphocytidyl-2-C-methyl-D-erythritol from CTP and 2-C-methyl-D-erythritol 4-phosphate (MEP). This is 2-C-methyl-D-erythritol 4-phosphate cytidylyltransferase from Mycobacterium leprae (strain Br4923).